The chain runs to 606 residues: Adenine deaminase (606 aa).

Belongs to the metallo-dependent hydrolases superfamily. Adenine deaminase family. Mn(2+) serves as cofactor.

It carries out the reaction adenine + H2O + H(+) = hypoxanthine + NH4(+). In Rubrobacter xylanophilus (strain DSM 9941 / JCM 11954 / NBRC 16129 / PRD-1), this protein is Adenine deaminase.